We begin with the raw amino-acid sequence, 518 residues long: Ribonuclease Y (518 aa).

A helical membrane pass occupies residues 2 to 22 (GSIIISALLALVIGAVVGFFV). A KH domain is found at 208–271 (TVSVVNLPND…ETARIALDKL (64 aa)). The HD domain occupies 334 to 427 (VLKHSVEVAF…VAAADALSAA (94 aa)).

The protein belongs to the RNase Y family.

Its subcellular location is the cell membrane. Functionally, endoribonuclease that initiates mRNA decay. This Geobacillus kaustophilus (strain HTA426) protein is Ribonuclease Y.